A 67-amino-acid chain; its full sequence is Ferredoxin (67 aa).

4Fe-4S ferredoxin-type domains lie at Trp3 to Glu31 and Pro36 to Ala67. Cys12, Asp15, and Cys18 together coordinate [4Fe-4S] cluster. Cys22 and Cys49 are disulfide-bonded. Cys57 provides a ligand contact to [4Fe-4S] cluster.

[4Fe-4S] cluster is required as a cofactor. It depends on [3Fe-4S] cluster as a cofactor.

Ferredoxins are iron-sulfur proteins that transfer electrons in a wide variety of metabolic reactions. The polypeptide is Ferredoxin (fdxA) (Pyrococcus abyssi (strain GE5 / Orsay)).